The primary structure comprises 260 residues: Zinc finger protein 575 (260 aa).

Positions 22–81 (PGLGPGRWLLPGAHQPSCPPAPHQGPLQKPSQSAPGPTASASAPPRPRRRPPPQRPHRCP) are disordered. Low complexity predominate over residues 51-64 (PSQSAPGPTASASA). The span at 67–78 (RPRRRPPPQRPH) shows a compositional bias: basic residues. 6 C2H2-type zinc fingers span residues 78-100 (HRCPDCDKAFSYPSKLATHRLAH), 106-128 (HPCPDCPKAFSYPSKLAAHRLTH), 134-156 (HPCPHCPKAFGHRSKLAAHLWTH), 162-184 (YPCPDCPKSFCYPSKLAAHRHTH), 192-214 (YPCPHCPKAFSFPSKLAAHRLCH), and 228-255 (HRCSSCGQAFGQRRLLLLHQRSHHQVEH).

It belongs to the krueppel C2H2-type zinc-finger protein family.

The protein resides in the nucleus. May be involved in transcriptional regulation. The protein is Zinc finger protein 575 (ZNF575) of Macaca fascicularis (Crab-eating macaque).